The chain runs to 2552 residues: Protein TIC 214 (2552 aa).

Transmembrane regions (helical) follow at residues 15–35 (LIFG…SYLF), 54–74 (LSYG…YLPF), 78–98 (LSNF…QFFW), 119–136 (TLAF…YTFF), 154–174 (FKIL…LICI), and 243–263 (ILAT…PIPF). Residues 304–325 (EEQKKDEKSADEEKKRAVEEEN) are disordered. Positions 305–322 (EQKKDEKSADEEKKRAVE) are enriched in basic and acidic residues. 3 consecutive transmembrane segments (helical) span residues 362-382 (TLYT…AFLF), 423-443 (PFLV…SVYI), and 452-472 (FLFN…HFFF). The tract at residues 2045-2077 (MKAEEQKKIDEEYEEKKEKRKKEQEEQGKAFDE) is disordered. Positions 2416–2511 (RRRRQLRIVN…IKKKLMRLRF (96 aa)) form a coiled coil.

The protein belongs to the TIC214 family. In terms of assembly, part of the Tic complex.

It is found in the plastid. The protein localises to the chloroplast inner membrane. Its function is as follows. Involved in protein precursor import into chloroplasts. May be part of an intermediate translocation complex acting as a protein-conducting channel at the inner envelope. The sequence is that of Protein TIC 214 from Pelargonium hortorum (Common geranium).